Reading from the N-terminus, the 336-residue chain is Glucokinase (336 aa).

12–17 (ADIGGT) contributes to the ATP binding site.

This sequence belongs to the bacterial glucokinase family.

The protein resides in the cytoplasm. The catalysed reaction is D-glucose + ATP = D-glucose 6-phosphate + ADP + H(+). This chain is Glucokinase, found in Helicobacter acinonychis (strain Sheeba).